A 977-amino-acid chain; its full sequence is Synaptonemal complex protein 2-like (977 aa).

Disordered regions lie at residues 447 to 474 (LGSQ…LSNA), 574 to 593 (QSTE…NSPL), 642 to 728 (RNKS…QDIM), and 804 to 824 (TEKN…VFYS). Low complexity predominate over residues 449–462 (SQTSEHSSTTKTSS). Over residues 463 to 474 (ANRSVQKSLSNA) the composition is skewed to polar residues. The segment covering 674 to 693 (SRKEMHRPEDINPKSPHSAE) has biased composition (basic and acidic residues).

It belongs to the SYCP2 family. Post-translationally, ubiquitinated and gradually degraded by the proteasome during oocyte maturation. Phosphorylated in maturing oocytes, before its degradation. As to expression, expressed in immature oocytes (at protein level). Expressed in the ovary.

The protein localises to the nucleus. Its subcellular location is the chromosome. The protein resides in the centromere. It is found in the nucleolus. Oocyte-specific protein that localizes to centromeres at the dictyate stage and regulates the survival of primordial oocytes. In Xenopus laevis (African clawed frog), this protein is Synaptonemal complex protein 2-like (sycp2l).